Here is a 689-residue protein sequence, read N- to C-terminus: Beta-adrenergic receptor kinase 1 (689 aa).

The tract at residues 1–190 (MADLEAVLAD…ELNIHLTMND (190 aa)) is N-terminal. In terms of domain architecture, RGS spans 54–175 (TFEKIFSQKL…IESEKFTRFC (122 aa)). Residues 191 to 453 (FSVHRIIGRG…AQEVKEDPFF (263 aa)) form the Protein kinase domain. ATP is bound by residues 197 to 205 (IGRGGFGEV) and Lys-220. The active-site Proton acceptor is the Asp-317. An AGC-kinase C-terminal domain is found at 454–521 (KAVDWQMVLL…TISERWQQEV (68 aa)). The 95-residue stretch at 558–652 (DCIMHGYMSK…WKKELRDVYR (95 aa)) folds into the PH domain. Positions 665–689 (KNKPRSPVVELSKMPLTQRGSANGL) are disordered. Ser-670 is subject to Phosphoserine.

The protein belongs to the protein kinase superfamily. AGC Ser/Thr protein kinase family. GPRK subfamily. As to quaternary structure, interacts with the heterodimer formed by GNB1 and GNG2. Interacts with GIT1. Interacts with, and phosphorylates chemokine-stimulated CCR5. Interacts with ARRB1. Interacts with LPAR1 and LPAR2. Interacts with RALA in response to LPAR1 activation. ADRBK1 and RALA mutually inhibit each other's binding to LPAR1. Interacts with ADRB2.

The protein resides in the cytoplasm. It is found in the cell membrane. The protein localises to the postsynapse. Its subcellular location is the presynapse. The catalysed reaction is [beta-adrenergic receptor] + ATP = [beta-adrenergic receptor]-phosphate + ADP + H(+). With respect to regulation, in contrast to other AGC family kinases, the catalytic activity is solely regulated by the binding of substrates and ligands, not by phosphorylation of the kinase domain. In terms of biological role, specifically phosphorylates the agonist-occupied form of the beta-adrenergic and closely related receptors, probably inducing a desensitization of them. Does not act on HTR1B/5-hydroxytryptamine 1B receptor. Key regulator of LPAR1 signaling. Competes with RALA for binding to LPAR1 thus affecting the signaling properties of the receptor. Desensitizes LPAR1 and LPAR2 in a phosphorylation-independent manner. Inhibits relaxation of airway smooth muscle in response to blue light. The sequence is that of Beta-adrenergic receptor kinase 1 from Didelphis virginiana (North American opossum).